The primary structure comprises 147 residues: Large ribosomal subunit protein bL9 (147 aa).

The protein belongs to the bacterial ribosomal protein bL9 family.

Its function is as follows. Binds to the 23S rRNA. The protein is Large ribosomal subunit protein bL9 of Mycoplasma capricolum subsp. capricolum (strain California kid / ATCC 27343 / NCTC 10154).